Here is a 512-residue protein sequence, read N- to C-terminus: Cytochrome P450 1A1 (512 aa).

The tract at residues 29 to 40 is mitochondrial targeting signal; it reads SRPRVPKGLKNP. O-linked (GlcNAc) serine glycosylation is present at serine 67. Phenylalanine 224 contacts substrate. Cysteine 457 provides a ligand contact to heme.

This sequence belongs to the cytochrome P450 family. As to quaternary structure, interacts with cytosolic chaperones HSP70 and HSP90; this interaction is required for initial targeting to mitochondria. Interacts (via mitochondrial targeting signal) with TOMM40 (via N-terminus); this interaction is required for translocation across the mitochondrial outer membrane. Heme serves as cofactor.

It localises to the endoplasmic reticulum membrane. The protein localises to the mitochondrion inner membrane. Its subcellular location is the microsome membrane. It is found in the cytoplasm. It carries out the reaction an organic molecule + reduced [NADPH--hemoprotein reductase] + O2 = an alcohol + oxidized [NADPH--hemoprotein reductase] + H2O + H(+). The enzyme catalyses estrone + reduced [NADPH--hemoprotein reductase] + O2 = 2-hydroxyestrone + oxidized [NADPH--hemoprotein reductase] + H2O + H(+). The catalysed reaction is estrone + reduced [NADPH--hemoprotein reductase] + O2 = 4-hydroxyestrone + oxidized [NADPH--hemoprotein reductase] + H2O + H(+). It catalyses the reaction estrone + reduced [NADPH--hemoprotein reductase] + O2 = 6alpha-hydroxyestrone + oxidized [NADPH--hemoprotein reductase] + H2O + H(+). It carries out the reaction estrone + reduced [NADPH--hemoprotein reductase] + O2 = 15alpha-hydroxyestrone + oxidized [NADPH--hemoprotein reductase] + H2O + H(+). The enzyme catalyses estrone + reduced [NADPH--hemoprotein reductase] + O2 = 16alpha-hydroxyestrone + oxidized [NADPH--hemoprotein reductase] + H2O + H(+). The catalysed reaction is 17beta-estradiol + reduced [NADPH--hemoprotein reductase] + O2 = 2-hydroxy-17beta-estradiol + oxidized [NADPH--hemoprotein reductase] + H2O + H(+). It catalyses the reaction 17beta-estradiol + reduced [NADPH--hemoprotein reductase] + O2 = 4-hydroxy-17beta-estradiol + oxidized [NADPH--hemoprotein reductase] + H2O + H(+). It carries out the reaction 17beta-estradiol + reduced [NADPH--hemoprotein reductase] + O2 = 6alpha-hydroxy-17beta-estradiol + oxidized [NADPH--hemoprotein reductase] + H2O + H(+). The enzyme catalyses 17beta-estradiol + reduced [NADPH--hemoprotein reductase] + O2 = 7alpha-hydroxy-17beta-estradiol + oxidized [NADPH--hemoprotein reductase] + H2O + H(+). The catalysed reaction is 17beta-estradiol + reduced [NADPH--hemoprotein reductase] + O2 = 15alpha-hydroxy-17beta-estradiol + oxidized [NADPH--hemoprotein reductase] + H2O + H(+). It catalyses the reaction (5Z,8Z,11Z)-eicosatrienoate + reduced [NADPH--hemoprotein reductase] + O2 = 19-hydroxy-(5Z,8Z,11Z)-eicosatrienoate + oxidized [NADPH--hemoprotein reductase] + H2O + H(+). It carries out the reaction (5Z,8Z,11Z,14Z)-eicosatetraenoate + reduced [NADPH--hemoprotein reductase] + O2 = 16-hydroxy-(5Z,8Z,11Z,14Z)-eicosatetraenoate + oxidized [NADPH--hemoprotein reductase] + H2O + H(+). The enzyme catalyses (5Z,8Z,11Z,14Z)-eicosatetraenoate + reduced [NADPH--hemoprotein reductase] + O2 = 17-hydroxy-(5Z,8Z,11Z,14Z)-eicosatetraenoate + oxidized [NADPH--hemoprotein reductase] + H2O + H(+). The catalysed reaction is (5Z,8Z,11Z,14Z)-eicosatetraenoate + reduced [NADPH--hemoprotein reductase] + O2 = 18-hydroxy-(5Z,8Z,11Z,14Z)-eicosatetraenoate + oxidized [NADPH--hemoprotein reductase] + H2O + H(+). It catalyses the reaction (5Z,8Z,11Z,14Z)-eicosatetraenoate + reduced [NADPH--hemoprotein reductase] + O2 = 19-hydroxy-(5Z,8Z,11Z,14Z)-eicosatetraenoate + oxidized [NADPH--hemoprotein reductase] + H2O + H(+). It carries out the reaction (5Z,8Z,11Z,14Z,17Z)-eicosapentaenoate + reduced [NADPH--hemoprotein reductase] + O2 = 19-hydroxy-(5Z,8Z,11Z,14Z,17Z)-eicosapentaenoate + oxidized [NADPH--hemoprotein reductase] + H2O + H(+). The enzyme catalyses (5Z,8Z,11Z,14Z)-eicosatetraenoate + reduced [NADPH--hemoprotein reductase] + O2 = (8R,9S)-epoxy-(5Z,11Z,14Z)-eicosatrienoate + oxidized [NADPH--hemoprotein reductase] + H2O + H(+). The catalysed reaction is (5Z,8Z,11Z,14Z)-eicosatetraenoate + reduced [NADPH--hemoprotein reductase] + O2 = (11R,12S)-epoxy-(5Z,8Z,14Z)-eicosatrienoate + oxidized [NADPH--hemoprotein reductase] + H2O + H(+). It catalyses the reaction (5Z,8Z,11Z,14Z)-eicosatetraenoate + reduced [NADPH--hemoprotein reductase] + O2 = (14S,15R)-epoxy-(5Z,8Z,11Z)-eicosatrienoate + oxidized [NADPH--hemoprotein reductase] + H2O + H(+). It carries out the reaction (5Z,8Z,11Z,14Z)-eicosatetraenoate + reduced [NADPH--hemoprotein reductase] + O2 = (14R,15S)-epoxy-(5Z,8Z,11Z)-eicosatrienoate + oxidized [NADPH--hemoprotein reductase] + H2O + H(+). The enzyme catalyses (5Z,8Z,11Z,14Z,17Z)-eicosapentaenoate + reduced [NADPH--hemoprotein reductase] + O2 = (17R,18S)-epoxy-(5Z,8Z,11Z,14Z)-eicosatetraenoate + oxidized [NADPH--hemoprotein reductase] + H2O + H(+). The catalysed reaction is (4Z,7Z,10Z,13Z,16Z,19Z)-docosahexaenoate + reduced [NADPH--hemoprotein reductase] + O2 = (19S,20R)-epoxy-(4Z,7Z,10Z,13Z,16Z)-docosapentaenoate + oxidized [NADPH--hemoprotein reductase] + H2O + H(+). It catalyses the reaction (4Z,7Z,10Z,13Z,16Z,19Z)-docosahexaenoate + reduced [NADPH--hemoprotein reductase] + O2 = (19R,20S)-epoxy-(4Z,7Z,10Z,13Z,16Z)-docosapentaenoate + oxidized [NADPH--hemoprotein reductase] + H2O + H(+). It carries out the reaction all-trans-retinol + reduced [NADPH--hemoprotein reductase] + O2 = all-trans-retinal + oxidized [NADPH--hemoprotein reductase] + 2 H2O + H(+). The enzyme catalyses all-trans-retinal + reduced [NADPH--hemoprotein reductase] + O2 = all-trans-retinoate + oxidized [NADPH--hemoprotein reductase] + H2O + 2 H(+). The catalysed reaction is (13S)-hydroperoxy-(9Z,11E)-octadecadienoate = 13-oxo-(9Z,11E)-octadecadienoate + H2O. It catalyses the reaction (12S)-hydroperoxy-(5Z,8Z,10E,14Z)-eicosatetraenoate = 12-oxo-(5Z,8Z,10E,14Z)-eicosatetraenoate + H2O. It carries out the reaction (15S)-hydroperoxy-(5Z,8Z,11Z,13E)-eicosatetraenoate = 15-oxo-(5Z,8Z,11Z,13E)-eicosatetraenoate + H2O. The enzyme catalyses (5S)-hydroperoxy-(6E,8Z,11Z,14Z)-eicosatetraenoate = 5-oxo-(6E,8Z,11Z,14Z)-eicosatetraenoate + H2O. It participates in steroid hormone biosynthesis. Its pathway is lipid metabolism; fatty acid metabolism. The protein operates within cofactor metabolism; retinol metabolism. Functionally, a cytochrome P450 monooxygenase involved in the metabolism of various endogenous substrates, including fatty acids, steroid hormones and vitamins. Mechanistically, uses molecular oxygen inserting one oxygen atom into a substrate, and reducing the second into a water molecule, with two electrons provided by NADPH via cytochrome P450 reductase (CPR; NADPH-ferrihemoprotein reductase). Catalyzes the hydroxylation of carbon-hydrogen bonds. Exhibits high catalytic activity for the formation of hydroxyestrogens from estrone (E1) and 17beta-estradiol (E2), namely 2-hydroxy E1 and E2, as well as D-ring hydroxylated E1 and E2 at the C15alpha and C16alpha positions. Displays different regioselectivities for polyunsaturated fatty acids (PUFA) hydroxylation. Catalyzes the epoxidation of double bonds of certain PUFA. Converts arachidonic acid toward epoxyeicosatrienoic acid (EET) regioisomers, 8,9-, 11,12-, and 14,15-EET, that function as lipid mediators in the vascular system. Displays an absolute stereoselectivity in the epoxidation of eicosapentaenoic acid (EPA) producing the 17(R),18(S) enantiomer. May play an important role in all-trans retinoic acid biosynthesis in extrahepatic tissues. Catalyzes two successive oxidative transformation of all-trans retinol to all-trans retinal and then to the active form all-trans retinoic acid. May also participate in eicosanoids metabolism by converting hydroperoxide species into oxo metabolites (lipoxygenase-like reaction, NADPH-independent). The chain is Cytochrome P450 1A1 (CYP1A1) from Macaca mulatta (Rhesus macaque).